The chain runs to 168 residues: Photosystem I assembly protein Ycf3 (168 aa).

TPR repeat units lie at residues 35-68, 72-105, and 120-153; these read AFTYYRDGMSAQSEGNYAEALQNYYEATRLEIDP, SYILYNIGLIHTSNGEHTKALEYYFRALERNPFL, and GEQAIRQGDSEIAEAWSDQAAEYWKQAIALTPGN.

It belongs to the Ycf3 family.

It is found in the plastid. It localises to the chloroplast thylakoid membrane. Functionally, essential for the assembly of the photosystem I (PSI) complex. May act as a chaperone-like factor to guide the assembly of the PSI subunits. The chain is Photosystem I assembly protein Ycf3 from Ranunculus macranthus (Large buttercup).